A 402-amino-acid polypeptide reads, in one-letter code: UDP-glucose 6-dehydrogenase (402 aa).

NAD(+)-binding positions include 2–19, Val11, Asp29, Lys34, Thr83, Thr118, and Glu145; that span reads KIAV…GVLL. Substrate contacts are provided by residues 141 to 145, Lys204, Asn208, 249 to 253, and Gly257; these read EFLRE and YNNPS. NAD(+) is bound at residue Tyr259. The Nucleophile role is filled by Cys260. Lys263 lines the NAD(+) pocket. Substrate is bound at residue Lys320. Residue Arg327 participates in NAD(+) binding.

This sequence belongs to the UDP-glucose/GDP-mannose dehydrogenase family.

The enzyme catalyses UDP-alpha-D-glucose + 2 NAD(+) + H2O = UDP-alpha-D-glucuronate + 2 NADH + 3 H(+). It functions in the pathway nucleotide-sugar biosynthesis; UDP-alpha-D-glucuronate biosynthesis; UDP-alpha-D-glucuronate from UDP-alpha-D-glucose: step 1/1. Functionally, catalyzes the formation of UDP-glucuronic acid which is required for capsular hyaluronic acid synthesis. This Streptococcus pyogenes serotype M1 protein is UDP-glucose 6-dehydrogenase (hasB).